The primary structure comprises 346 residues: Phosphoribosylformylglycinamidine cyclo-ligase (346 aa).

This sequence belongs to the AIR synthase family.

The protein localises to the cytoplasm. The catalysed reaction is 2-formamido-N(1)-(5-O-phospho-beta-D-ribosyl)acetamidine + ATP = 5-amino-1-(5-phospho-beta-D-ribosyl)imidazole + ADP + phosphate + H(+). It functions in the pathway purine metabolism; IMP biosynthesis via de novo pathway; 5-amino-1-(5-phospho-D-ribosyl)imidazole from N(2)-formyl-N(1)-(5-phospho-D-ribosyl)glycinamide: step 2/2. This chain is Phosphoribosylformylglycinamidine cyclo-ligase, found in Brevibacillus brevis (strain 47 / JCM 6285 / NBRC 100599).